A 294-amino-acid chain; its full sequence is 4-hydroxybenzoate octaprenyltransferase (294 aa).

Helical transmembrane passes span 37–57 (LWAM…WIFF), 101–121 (LAVA…LNAL), 142–162 (FFAI…PMAF), 169–189 (VPFV…AYDT), 219–239 (IMIC…LLGL), 241–261 (WPYY…YTLI), and 271–293 (AAFR…AYLL).

It belongs to the UbiA prenyltransferase family. Requires Mg(2+) as cofactor.

Its subcellular location is the cell inner membrane. The catalysed reaction is all-trans-octaprenyl diphosphate + 4-hydroxybenzoate = 4-hydroxy-3-(all-trans-octaprenyl)benzoate + diphosphate. The protein operates within cofactor biosynthesis; ubiquinone biosynthesis. Its function is as follows. Catalyzes the prenylation of para-hydroxybenzoate (PHB) with an all-trans polyprenyl group. Mediates the second step in the final reaction sequence of ubiquinone-8 (UQ-8) biosynthesis, which is the condensation of the polyisoprenoid side chain with PHB, generating the first membrane-bound Q intermediate 3-octaprenyl-4-hydroxybenzoate. In Cupriavidus metallidurans (strain ATCC 43123 / DSM 2839 / NBRC 102507 / CH34) (Ralstonia metallidurans), this protein is 4-hydroxybenzoate octaprenyltransferase.